Reading from the N-terminus, the 912-residue chain is Accessory gland protein Acp36DE (912 aa).

A signal peptide spans M1–S23. Low complexity-rich tracts occupy residues Q193 to S220, S230 to Q255, K271 to Q324, and Q521 to Q544. Disordered regions lie at residues Q193–Q255, K271–L349, T518–Q544, P638–G671, and G732–G912. Composition is skewed to low complexity over residues G732–Q757 and Q765–T785. The span at R803–Q818 shows a compositional bias: basic and acidic residues. Low complexity predominate over residues S821–S845. The segment covering E851–D861 has biased composition (polar residues). The segment covering Q862–S897 has biased composition (low complexity). Positions K898 to G912 are enriched in polar residues.

Proteolytically cleaved by the seminal metalloprotease Semp1. Cleavage appears to take place in the mated female. As to expression, detected in the male accessory glands (at protein level). Produced in the accessory glands and secreted into seminal fluid.

It is found in the secreted. Functionally, responsible for physiological and behavioral changes in mated female flies. Associates with sperm and localizes to specific regions of the female reproductive tract, including the sperm storage organs. It accelerates sperm accumulation into storage but does not mediate the entry of the first sperm into storage. Once sperm storage has initiated it seems to act as a guidance factor helping subsequent sperm move into storage, a corral concentrating sperm around the SSO entrances and/or a trigger for responses within the female that accelerate storage of sperm. This chain is Accessory gland protein Acp36DE (Acp36DE), found in Drosophila melanogaster (Fruit fly).